Reading from the N-terminus, the 298-residue chain is Protoheme IX farnesyltransferase (298 aa).

9 helical membrane-spanning segments follow: residues 26–46 (VVSL…PGAV), 52–72 (IFGT…NCLV), 93–113 (VSVP…LFML), 120–140 (LTMW…TVIL), 148–168 (IVIG…AVTG), 174–194 (ALLL…ALAL), 219–239 (LHVL…YLTQ), 241–261 (SGLI…YYAI), and 278–298 (YSIA…YFYF).

Belongs to the UbiA prenyltransferase family. Protoheme IX farnesyltransferase subfamily.

The protein resides in the cell inner membrane. It catalyses the reaction heme b + (2E,6E)-farnesyl diphosphate + H2O = Fe(II)-heme o + diphosphate. It functions in the pathway porphyrin-containing compound metabolism; heme O biosynthesis; heme O from protoheme: step 1/1. In terms of biological role, converts heme B (protoheme IX) to heme O by substitution of the vinyl group on carbon 2 of heme B porphyrin ring with a hydroxyethyl farnesyl side group. The protein is Protoheme IX farnesyltransferase of Nitrosomonas europaea (strain ATCC 19718 / CIP 103999 / KCTC 2705 / NBRC 14298).